The primary structure comprises 598 residues: Serine/threonine-protein kinase cot-1 (598 aa).

Composition is skewed to polar residues over residues 1-16 (MDNT…TNDT), 24-33 (TYPTTPSTFP), and 99-126 (PRTS…TQTE). Disordered stretches follow at residues 1-46 (MDNT…GGSQ), 80-148 (GSAG…NQKK), and 163-190 (RARE…RESI). The Protein kinase domain maps to 214-518 (YQTIKIIGKG…AHEIKSHAFF (305 aa)). Residues 220-228 (IGKGAFGEV) and Lys-243 contribute to the ATP site. Asp-337 (proton acceptor) is an active-site residue. In terms of domain architecture, AGC-kinase C-terminal spans 519 to 598 (RGVEFDSLRR…TFKRFDNNFR (80 aa)).

Belongs to the protein kinase superfamily. STE Ser/Thr protein kinase family. COT1 subfamily.

It catalyses the reaction L-seryl-[protein] + ATP = O-phospho-L-seryl-[protein] + ADP + H(+). The catalysed reaction is L-threonyl-[protein] + ATP = O-phospho-L-threonyl-[protein] + ADP + H(+). Functionally, protein kinase required for hyphal elongation. The polypeptide is Serine/threonine-protein kinase cot-1 (cot-1) (Neurospora crassa (strain ATCC 24698 / 74-OR23-1A / CBS 708.71 / DSM 1257 / FGSC 987)).